Reading from the N-terminus, the 251-residue chain is DNA repair protein RecO (251 aa).

This sequence belongs to the RecO family.

Involved in DNA repair and RecF pathway recombination. This Staphylococcus saprophyticus subsp. saprophyticus (strain ATCC 15305 / DSM 20229 / NCIMB 8711 / NCTC 7292 / S-41) protein is DNA repair protein RecO.